The primary structure comprises 331 residues: Cathepsin S (331 aa).

The N-terminal stretch at methionine 1–alanine 16 is a signal peptide. Positions glutamine 17–lysine 114 are cleaved as a propeptide — activation peptide. N-linked (GlcNAc...) asparagine glycosylation occurs at asparagine 104. 4 disulfides stabilise this stretch: cysteine 126–cysteine 224, cysteine 136–cysteine 180, cysteine 170–cysteine 213, and cysteine 272–cysteine 320. Cysteine 139 is a catalytic residue. Residues histidine 278 and asparagine 298 contribute to the active site.

The protein belongs to the peptidase C1 family.

Its subcellular location is the lysosome. It localises to the secreted. The protein resides in the cytoplasmic vesicle. It is found in the phagosome. The catalysed reaction is Similar to cathepsin L, but with much less activity on Z-Phe-Arg-|-NHMec, and more activity on the Z-Val-Val-Arg-|-Xaa compound.. In terms of biological role, thiol protease. Key protease responsible for the removal of the invariant chain from MHC class II molecules and MHC class II antigen presentation. The bond-specificity of this proteinase is in part similar to the specificities of cathepsin L. The protein is Cathepsin S (CTSS) of Canis lupus familiaris (Dog).